A 300-amino-acid chain; its full sequence is MCKQMNLEGLTTEARNEATKKIDQVSTLEMVTLINQEDQKVAQAIEKVLPQIAAAIDAAAERFKKGGRLIYCGAGTSGRLGALDAIELTPTYSVSPERAFGILAGGEKAMYQAIEGAEDSKELAIEDLTQHQLTARDVVIAIAASGRTPYAVSAIEYGKKVGALTISVTCNNQSPMNQLAEIGIAPIVGPEVITGSTRMKAGSAQKMVLNMFSTGIMVKVGNIYQNLMVNVQPTNEKLIQRATNIIKEAAEIEESQAKEYLEAAQLEVAPAIVMAKAHVDFQKAKQLLAEHDGRISEVLA.

The SIS domain occupies 59 to 222 (AAERFKKGGR…STGIMVKVGN (164 aa)). Catalysis depends on glutamate 87, which acts as the Proton donor. Glutamate 118 is a catalytic residue.

It belongs to the GCKR-like family. MurNAc-6-P etherase subfamily. Homodimer.

The enzyme catalyses N-acetyl-D-muramate 6-phosphate + H2O = N-acetyl-D-glucosamine 6-phosphate + (R)-lactate. It participates in amino-sugar metabolism; N-acetylmuramate degradation. Functionally, specifically catalyzes the cleavage of the D-lactyl ether substituent of MurNAc 6-phosphate, producing GlcNAc 6-phosphate and D-lactate. The polypeptide is N-acetylmuramic acid 6-phosphate etherase 1 (Enterococcus faecalis (strain ATCC 700802 / V583)).